We begin with the raw amino-acid sequence, 214 residues long: UPF0301 protein blr1492 (214 aa).

Positions 1–22 (MAPTGKRTGESTRSTGPAPPSS) are disordered.

This sequence belongs to the UPF0301 (AlgH) family.

The chain is UPF0301 protein blr1492 from Bradyrhizobium diazoefficiens (strain JCM 10833 / BCRC 13528 / IAM 13628 / NBRC 14792 / USDA 110).